A 141-amino-acid polypeptide reads, in one-letter code: MLHSQLPVAAPLRLLCALLLLPSVTMIPGGLSPRSVTDPDVQEAAEFAVQEYNALSANAYYYKQLRIVEAQSQVVTGAKYYLTMELMKTKCAKTTGKPKVYKEIQNCELPPKAQQEKLTCRFQVWSRPWLEKIELTKMSCN.

An N-terminal signal peptide occupies residues 1–26; that stretch reads MLHSQLPVAAPLRLLCALLLLPSVTM. The 101-residue stretch at 29 to 129 folds into the Cystatin domain; the sequence is GGLSPRSVTD…CRFQVWSRPW (101 aa). A Secondary area of contact motif is present at residues 73–77; that stretch reads QVVTG. 2 cysteine pairs are disulfide-bonded: cysteine 91–cysteine 107 and cysteine 120–cysteine 140.

It belongs to the cystatin family. As to expression, expressed at a low level by the venom gland (at protein level).

It is found in the secreted. Inhibits various C1 cysteine proteases including cathepsin L, papain and cathepsin B. This protein has no toxic activity and its function in the venom is unknown. It may play a role as a housekeeping or regulatory protein. The polypeptide is Cystatin (Hoplocephalus stephensii (Stephens's banded snake)).